Here is a 127-residue protein sequence, read N- to C-terminus: Large ribosomal subunit protein bL17 (127 aa).

This sequence belongs to the bacterial ribosomal protein bL17 family. In terms of assembly, part of the 50S ribosomal subunit. Contacts protein L32.

The chain is Large ribosomal subunit protein bL17 from Lactiplantibacillus plantarum (strain ATCC BAA-793 / NCIMB 8826 / WCFS1) (Lactobacillus plantarum).